We begin with the raw amino-acid sequence, 436 residues long: Phosphate-repressible acid phosphatase (436 aa).

A signal peptide spans 1–20 (MKGTAASALLIALSATAAQA). N-linked (GlcNAc...) asparagine glycans are attached at residues asparagine 227, asparagine 283, and asparagine 304.

As to quaternary structure, monomer.

It carries out the reaction a phosphate monoester + H2O = an alcohol + phosphate. In Aspergillus niger, this protein is Phosphate-repressible acid phosphatase (pacA).